The primary structure comprises 226 residues: Isoprenyl transferase (226 aa).

The active site involves Asp12. Asp12 contacts Mg(2+). Substrate-binding positions include 13–16 (GNAR), Trp17, Lys25, His29, and 57–59 (SSE). Catalysis depends on Asn60, which acts as the Proton acceptor. Residues Trp61, Arg63, Arg174, and 180-182 (RIS) contribute to the substrate site. Glu193 is a Mg(2+) binding site.

This sequence belongs to the UPP synthase family. In terms of assembly, homodimer. Mg(2+) serves as cofactor.

Its function is as follows. Catalyzes the condensation of isopentenyl diphosphate (IPP) with allylic pyrophosphates generating different type of terpenoids. This chain is Isoprenyl transferase, found in Rickettsia typhi (strain ATCC VR-144 / Wilmington).